A 768-amino-acid polypeptide reads, in one-letter code: Ral guanine nucleotide dissociation stimulator-like 1 (768 aa).

The 132-residue stretch at 65–196 (KIRTIKAGTL…RAQNLLEQFQ (132 aa)) folds into the N-terminal Ras-GEF domain. Positions 232–501 (SEDLVAEQLT…YALSCEIEAA (270 aa)) constitute a Ras-GEF domain. S520 is subject to Phosphoserine. A disordered region spans residues 530-623 (PGSTPTKEQP…PPTCNNNPKI (94 aa)). Low complexity-rich tracts occupy residues 541–561 (SAAS…SCES) and 586–596 (ESSSSCSSIHS). A compositionally biased stretch (polar residues) spans 597 to 621 (MDTNSSGMSSLINPLSSPPTCNNNP). Residues 648–735 (DTCIIRISVE…FDFILRKKNS (88 aa)) form the Ras-associating domain.

In terms of assembly, interacts with Ras.

Its function is as follows. Probable guanine nucleotide exchange factor. The sequence is that of Ral guanine nucleotide dissociation stimulator-like 1 (Rgl1) from Mus musculus (Mouse).